The chain runs to 512 residues: Probable anion transporter 3, chloroplastic (512 aa).

Residues 1–44 constitute a chloroplast transit peptide; it reads MATVGSLKPLHHSSCSSSFPRNPIVNRKALLGFVFDSARKNQIR. The next 12 membrane-spanning stretches (helical) occupy residues 102–124, 139–159, 167–187, 191–211, 228–248, 250–270, 324–344, 359–379, 396–416, 422–442, 462–482, and 486–506; these read VILT…VAVV, VVQS…GALV, VLAW…WAAA, LALL…MPSM, VGIS…LTPL, LSSI…LLWV, WAII…LSWM, AAWF…YAGA, KIMQ…LNFA, AAVF…GFLL, AGTL…QWLG, and AFLT…LLFA.

The protein belongs to the major facilitator superfamily. Sodium/anion cotransporter (TC 2.A.1.14) family. As to expression, expressed in roots.

The protein localises to the plastid. The protein resides in the chloroplast membrane. Inorganic phosphate and probable anion transporter. The chain is Probable anion transporter 3, chloroplastic (ANTR3) from Arabidopsis thaliana (Mouse-ear cress).